Consider the following 458-residue polypeptide: Adenylosuccinate synthetase (458 aa).

Residues 17 to 23 (GDEGKGK) and 45 to 47 (GHT) each bind GTP. The Proton acceptor role is filled by D18. Residues D18 and G45 each coordinate Mg(2+). IMP is bound by residues 18-21 (DEGK), 43-46 (NAGH), T137, R151, Q247, T262, and R330. The active-site Proton donor is H46. Substrate is bound at residue 326–332 (VTTGRSR). GTP contacts are provided by residues R332, 358 to 360 (KLD), and 440 to 442 (STG).

The protein belongs to the adenylosuccinate synthetase family. As to quaternary structure, homodimer. Mg(2+) serves as cofactor.

It is found in the cytoplasm. The enzyme catalyses IMP + L-aspartate + GTP = N(6)-(1,2-dicarboxyethyl)-AMP + GDP + phosphate + 2 H(+). It functions in the pathway purine metabolism; AMP biosynthesis via de novo pathway; AMP from IMP: step 1/2. Plays an important role in the de novo pathway of purine nucleotide biosynthesis. Catalyzes the first committed step in the biosynthesis of AMP from IMP. The protein is Adenylosuccinate synthetase of Albidiferax ferrireducens (strain ATCC BAA-621 / DSM 15236 / T118) (Rhodoferax ferrireducens).